The sequence spans 261 residues: Acetylglutamate kinase (261 aa).

Substrate is bound by residues 48 to 49, R70, and N164; that span reads GG.

The protein belongs to the acetylglutamate kinase family. ArgB subfamily.

Its subcellular location is the cytoplasm. The enzyme catalyses N-acetyl-L-glutamate + ATP = N-acetyl-L-glutamyl 5-phosphate + ADP. Its pathway is amino-acid biosynthesis; L-arginine biosynthesis; N(2)-acetyl-L-ornithine from L-glutamate: step 2/4. Functionally, catalyzes the ATP-dependent phosphorylation of N-acetyl-L-glutamate. The chain is Acetylglutamate kinase from Roseiflexus sp. (strain RS-1).